Here is a 469-residue protein sequence, read N- to C-terminus: tRNA-2-methylthio-N(6)-dimethylallyladenosine synthase (469 aa).

In terms of domain architecture, MTTase N-terminal spans 22 to 142 (RKVFIKTYGC…LPEALRRAQQ (121 aa)). The [4Fe-4S] cluster site is built by Cys31, Cys67, Cys105, Cys183, Cys187, and Cys190. Positions 169–401 (RARGVTAFLT…QALLLKQQQE (233 aa)) constitute a Radical SAM core domain. In terms of domain architecture, TRAM spans 404–466 (ESCIGKEIDL…TNSLFAERAE (63 aa)).

The protein belongs to the methylthiotransferase family. MiaB subfamily. In terms of assembly, monomer. [4Fe-4S] cluster serves as cofactor.

Its subcellular location is the cytoplasm. The enzyme catalyses N(6)-dimethylallyladenosine(37) in tRNA + (sulfur carrier)-SH + AH2 + 2 S-adenosyl-L-methionine = 2-methylsulfanyl-N(6)-dimethylallyladenosine(37) in tRNA + (sulfur carrier)-H + 5'-deoxyadenosine + L-methionine + A + S-adenosyl-L-homocysteine + 2 H(+). Catalyzes the methylthiolation of N6-(dimethylallyl)adenosine (i(6)A), leading to the formation of 2-methylthio-N6-(dimethylallyl)adenosine (ms(2)i(6)A) at position 37 in tRNAs that read codons beginning with uridine. This is tRNA-2-methylthio-N(6)-dimethylallyladenosine synthase from Rhizobium etli (strain CIAT 652).